Reading from the N-terminus, the 361-residue chain is UDP-3-O-acylglucosamine N-acyltransferase (361 aa).

Catalysis depends on His-253, which acts as the Proton acceptor.

It belongs to the transferase hexapeptide repeat family. LpxD subfamily. In terms of assembly, homotrimer.

It catalyses the reaction a UDP-3-O-[(3R)-3-hydroxyacyl]-alpha-D-glucosamine + a (3R)-hydroxyacyl-[ACP] = a UDP-2-N,3-O-bis[(3R)-3-hydroxyacyl]-alpha-D-glucosamine + holo-[ACP] + H(+). It functions in the pathway bacterial outer membrane biogenesis; LPS lipid A biosynthesis. Functionally, catalyzes the N-acylation of UDP-3-O-acylglucosamine using 3-hydroxyacyl-ACP as the acyl donor. Is involved in the biosynthesis of lipid A, a phosphorylated glycolipid that anchors the lipopolysaccharide to the outer membrane of the cell. The polypeptide is UDP-3-O-acylglucosamine N-acyltransferase (Burkholderia pseudomallei (strain 1710b)).